A 679-amino-acid chain; its full sequence is Glycine--tRNA ligase beta subunit (679 aa).

It belongs to the class-II aminoacyl-tRNA synthetase family. Tetramer of two alpha and two beta subunits.

The protein resides in the cytoplasm. The catalysed reaction is tRNA(Gly) + glycine + ATP = glycyl-tRNA(Gly) + AMP + diphosphate. The chain is Glycine--tRNA ligase beta subunit (glyS) from Bacillus subtilis (strain 168).